The primary structure comprises 359 residues: MKKTLAALIVGAFAASAANAAVVYNNEGTNVELGGRLSIIAEQSNSTVDNQKQQHGALRNQGSRFHIKATHNFGDGFYAQGYLETRFVTKASENGSDNFGDITSKYAYVTLGNKAFGEVKLGRAKTIADGITSAEDKEYGVLNNSDYIPTSGNTVGYTFKGIDGLVLGANYLLAQKREGAKNTNKQPNDKAGEVRIGEINNGIQVGAKYDANDIVAKIAYGRTNYKYNEADEHTQQLNGVLATLGYRFSDLGLLVSLDSGYAKTKNYKTKHEKRYFVSPGFQYELMEDTNVYGNFKYERTSVDQGEKTREQAVLFGVDHKLHKQLLTYIEGAYARTKTTNGGVKTEKEKSVGVGLRVYF.

Positions 1–20 (MKKTLAALIVGAFAASAANA) are cleaved as a signal peptide.

It belongs to the Gram-negative porin family. As to quaternary structure, homotrimer.

It localises to the cell outer membrane. Forms pores that allow passive diffusion of small molecules across the outer membrane. In Haemophilus influenzae (strain ATCC 51907 / DSM 11121 / KW20 / Rd), this protein is Outer membrane protein P2 (ompP2).